A 662-amino-acid polypeptide reads, in one-letter code: UvrABC system protein B (662 aa).

The Helicase ATP-binding domain occupies 25-411; that stretch reads DGIIAGDKFQ…STRIVEQVIR (387 aa). 38–45 is a binding site for ATP; sequence GVTGSGKT. Positions 91-114 match the Beta-hairpin motif; it reads YYDYYQPEAYVPARDLYIEKDASI. In terms of domain architecture, Helicase C-terminal spans 428–594; the sequence is QMEHIYGEVK…TIKKAIEDIL (167 aa). The UVR domain occupies 625-660; it reads KKLIKKLEAQMAEYADMLMFEEAAVIRDKIEEVKRI.

This sequence belongs to the UvrB family. As to quaternary structure, forms a heterotetramer with UvrA during the search for lesions. Interacts with UvrC in an incision complex.

It localises to the cytoplasm. The UvrABC repair system catalyzes the recognition and processing of DNA lesions. A damage recognition complex composed of 2 UvrA and 2 UvrB subunits scans DNA for abnormalities. Upon binding of the UvrA(2)B(2) complex to a putative damaged site, the DNA wraps around one UvrB monomer. DNA wrap is dependent on ATP binding by UvrB and probably causes local melting of the DNA helix, facilitating insertion of UvrB beta-hairpin between the DNA strands. Then UvrB probes one DNA strand for the presence of a lesion. If a lesion is found the UvrA subunits dissociate and the UvrB-DNA preincision complex is formed. This complex is subsequently bound by UvrC and the second UvrB is released. If no lesion is found, the DNA wraps around the other UvrB subunit that will check the other stand for damage. This Treponema denticola (strain ATCC 35405 / DSM 14222 / CIP 103919 / JCM 8153 / KCTC 15104) protein is UvrABC system protein B.